We begin with the raw amino-acid sequence, 1763 residues long: Genome polyprotein (1763 aa).

Residues 458 to 614 (DGVITSCNKR…ESHKRARPGT (157 aa)) enclose the SF3 helicase domain. 484–491 (GPPGCGKT) is a binding site for ATP. Position 984 is an O-(5'-phospho-RNA)-tyrosine (Tyr-984). One can recognise a Peptidase C24 domain in the interval 1073 to 1229 (GPGTKFHKNA…KLVVPYVHID (157 aa)). Catalysis depends on for 3CLpro activity residues His-1110, Glu-1131, and Cys-1193. The 126-residue stretch at 1478-1603 (AKVYAVDYSK…MFPTMFASIS (126 aa)) folds into the RdRp catalytic domain.

As to quaternary structure, protein p32: Homodimer. Interacts with NTPase, protein p30 and protease-polymerase p76. Interacts with capsid protein VP1 and protease-polymerase p76. In terms of assembly, homooligomer. Interacts with Vpg, protein p32 and may interact with capsid protein VP1. Post-translationally, specific enzymatic cleavages in vivo yield mature proteins. Pro-Pol is first autocatalytically cleaved, then processes the whole polyprotein. In terms of processing, VPg is uridylylated by the polymerase and is covalently attached to the 5'-end of the polyadenylated genomic and subgenomic RNAs. This uridylylated form acts as a nucleotide-peptide primer for the polymerase.

It carries out the reaction a ribonucleoside 5'-triphosphate + H2O = a ribonucleoside 5'-diphosphate + phosphate + H(+). The enzyme catalyses RNA(n) + a ribonucleoside 5'-triphosphate = RNA(n+1) + diphosphate. It catalyses the reaction Endopeptidase with a preference for cleavage when the P1 position is occupied by Glu-|-Xaa and the P1' position is occupied by Gly-|-Yaa.. Its function is as follows. NTPase presumably plays a role in replication. Despite having similarities with helicases, does not seem to display any helicase activity. In terms of biological role, viral genome-linked protein is covalently linked to the 5'-end of the positive-strand, negative-strand genomic RNAs and subgenomic RNA. Acts as a genome-linked replication primer. May recruit ribosome to viral RNA thereby promoting viral proteins translation. The protease activity processes the polyprotein: Pro-Pol is first released by autocleavage, then all other proteins are cleaved. Cleaves host translation initiation factor eIF4G1, eIF4G2 and PABP1 thereby inducing a shutdown of host protein synthesis. This shutdown may not prevent viral mRNA from being translated since viral Vpg replaces the cap. May cleave host polyadenylate-binding protein thereby inhibiting cellular translation. Seems to act as a RNase and degrades host Pol II-driven mRNAs with the help of host XRN1. Inhibits the integrated stress response (ISR) in the infected cell by cleaving host G3BP1 and G3BP2. Stress granule formation is thus inhibited, which allows protein synthesis and viral replication. The RNA-directed RNA polymerase activity replicates genomic and antigenomic viral RNA by recognizing specific signals. Also transcribes a subgenomic mRNA by initiating RNA synthesis internally on antigenomic RNA. This sgRNA codes for structural proteins. Catalyzes the covalent attachment VPg with viral RNAs. Functionally, selectively decays the mRNA of host interferon receptor IFNAR1. This chain is Genome polyprotein, found in Feline calicivirus (FCV).